The primary structure comprises 125 residues: Ribonuclease pancreatic (125 aa).

Residues lysine 7 and arginine 10 each contribute to the substrate site. Histidine 12 functions as the Proton acceptor in the catalytic mechanism. 4 disulfide bridges follow: cysteine 27-cysteine 85, cysteine 41-cysteine 96, cysteine 59-cysteine 111, and cysteine 66-cysteine 73. Asparagine 35 is a glycosylation site (N-linked (GlcNAc...) asparagine). Substrate is bound by residues 42–46 (KPVNT), lysine 67, and arginine 86. The Proton donor role is filled by histidine 120.

It belongs to the pancreatic ribonuclease family. As to quaternary structure, monomer. Interacts with and forms tight 1:1 complexes with RNH1. Dimerization of two such complexes may occur. Interaction with RNH1 inhibits this protein. Pancreas.

It localises to the secreted. It catalyses the reaction an [RNA] containing cytidine + H2O = an [RNA]-3'-cytidine-3'-phosphate + a 5'-hydroxy-ribonucleotide-3'-[RNA].. The enzyme catalyses an [RNA] containing uridine + H2O = an [RNA]-3'-uridine-3'-phosphate + a 5'-hydroxy-ribonucleotide-3'-[RNA].. In terms of biological role, endonuclease that catalyzes the cleavage of RNA on the 3' side of pyrimidine nucleotides. Acts on single-stranded and double-stranded RNA. The protein is Ribonuclease pancreatic (RNASE1) of Spalax ehrenbergi (Middle East blind mole rat).